Reading from the N-terminus, the 270-residue chain is MPELPEVETSRKGISPHLINKSVQNVVLRHTQLRWKIPQDLLSDIKDKILLSIDRRAKYLLFNFTSGTLLIHLGMSGSLRICPLNSPPKKHDHADLIFADCLLRYTDPRRFGAILWLGLTPEDSPLLNKLGPEPLNDDFNAKYLYQQATKRKLPVKQFIMDQKVVTGVGNIYATEALFNSGISPIRAAGNISEKRYQILVTEIKEILQQAIKQGGTTLKDFVGSDGKPGYFQQTLQVYGKTGQQCPSCETPLKAVKLAARASVYCPECQS.

The active-site Schiff-base intermediate with DNA is the P2. Catalysis depends on E3, which acts as the Proton donor. The active-site Proton donor; for beta-elimination activity is K58. Residues H91, R109, and R151 each contribute to the DNA site. The FPG-type zinc finger occupies 236 to 270 (QVYGKTGQQCPSCETPLKAVKLAARASVYCPECQS). R260 acts as the Proton donor; for delta-elimination activity in catalysis.

This sequence belongs to the FPG family. In terms of assembly, monomer. It depends on Zn(2+) as a cofactor.

The enzyme catalyses Hydrolysis of DNA containing ring-opened 7-methylguanine residues, releasing 2,6-diamino-4-hydroxy-5-(N-methyl)formamidopyrimidine.. It catalyses the reaction 2'-deoxyribonucleotide-(2'-deoxyribose 5'-phosphate)-2'-deoxyribonucleotide-DNA = a 3'-end 2'-deoxyribonucleotide-(2,3-dehydro-2,3-deoxyribose 5'-phosphate)-DNA + a 5'-end 5'-phospho-2'-deoxyribonucleoside-DNA + H(+). Its function is as follows. Involved in base excision repair of DNA damaged by oxidation or by mutagenic agents. Acts as a DNA glycosylase that recognizes and removes damaged bases. Has a preference for oxidized purines, such as 7,8-dihydro-8-oxoguanine (8-oxoG). Has AP (apurinic/apyrimidinic) lyase activity and introduces nicks in the DNA strand. Cleaves the DNA backbone by beta-delta elimination to generate a single-strand break at the site of the removed base with both 3'- and 5'-phosphates. This is Formamidopyrimidine-DNA glycosylase from Psychromonas ingrahamii (strain DSM 17664 / CCUG 51855 / 37).